The primary structure comprises 151 residues: UPF0178 protein GSU0171 (151 aa).

Belongs to the UPF0178 family.

This chain is UPF0178 protein GSU0171, found in Geobacter sulfurreducens (strain ATCC 51573 / DSM 12127 / PCA).